Here is a 166-residue protein sequence, read N- to C-terminus: Urease accessory protein UreE (166 aa).

The disordered stretch occupies residues 133 to 154; the sequence is QPEHGAYGGGHHHSRHGDEDFN.

The protein belongs to the UreE family.

It localises to the cytoplasm. Its function is as follows. Involved in urease metallocenter assembly. Binds nickel. Probably functions as a nickel donor during metallocenter assembly. The sequence is that of Urease accessory protein UreE from Pseudomonas fluorescens (strain SBW25).